The sequence spans 227 residues: Probable chorismate pyruvate-lyase (227 aa).

The substrate site is built by Arg75, Leu113, and Glu173. Residues 192-227 (SGDWSAHPRVREHGRPLEHTASRAHPATRASDEQRR) are disordered. Residues 200-212 (RVREHGRPLEHTA) show a composition bias toward basic and acidic residues.

It belongs to the UbiC family.

Its subcellular location is the cytoplasm. It carries out the reaction chorismate = 4-hydroxybenzoate + pyruvate. The protein operates within cofactor biosynthesis; ubiquinone biosynthesis. Functionally, removes the pyruvyl group from chorismate, with concomitant aromatization of the ring, to provide 4-hydroxybenzoate (4HB) for the ubiquinone pathway. This chain is Probable chorismate pyruvate-lyase, found in Paraburkholderia xenovorans (strain LB400).